A 748-amino-acid polypeptide reads, in one-letter code: Catalase-peroxidase (748 aa).

Positions 92 to 238 (WHSAGTYRIG…LAAVQMGLIY (147 aa)) form a cross-link, tryptophyl-tyrosyl-methioninium (Trp-Tyr) (with M-264). The active-site Proton acceptor is H93. A cross-link (tryptophyl-tyrosyl-methioninium (Tyr-Met) (with W-92)) is located at residues 238-264 (YVNPEGPDGNPDPIASARDIRDTFARM). Residue H279 coordinates heme b.

Belongs to the peroxidase family. Peroxidase/catalase subfamily. In terms of assembly, homodimer or homotetramer. Heme b serves as cofactor. In terms of processing, formation of the three residue Trp-Tyr-Met cross-link is important for the catalase, but not the peroxidase activity of the enzyme.

The catalysed reaction is H2O2 + AH2 = A + 2 H2O. It catalyses the reaction 2 H2O2 = O2 + 2 H2O. In terms of biological role, bifunctional enzyme with both catalase and broad-spectrum peroxidase activity. This chain is Catalase-peroxidase, found in Xanthomonas axonopodis pv. citri (strain 306).